The sequence spans 174 residues: Dual-action ribosomal maturation protein DarP (174 aa).

The protein belongs to the DarP family.

Its subcellular location is the cytoplasm. Functionally, member of a network of 50S ribosomal subunit biogenesis factors which assembles along the 30S-50S interface, preventing incorrect 23S rRNA structures from forming. Promotes peptidyl transferase center (PTC) maturation. The chain is Dual-action ribosomal maturation protein DarP from Vibrio campbellii (strain ATCC BAA-1116).